The primary structure comprises 450 residues: UPF0210 protein CPE1497 (450 aa).

This sequence belongs to the UPF0210 family. In terms of assembly, homodimer.

The protein is UPF0210 protein CPE1497 of Clostridium perfringens (strain 13 / Type A).